The sequence spans 158 residues: Protein Smg homolog (158 aa).

Belongs to the Smg family.

The chain is Protein Smg homolog from Shewanella sp. (strain MR-4).